The following is a 414-amino-acid chain: Probable indole-3-pyruvate monooxygenase YUCCA1 (414 aa).

25–30 (GAGPSG) contacts FAD. 189–194 (GCGNSG) is a binding site for NADP(+).

Belongs to the FMO family. Requires FAD as cofactor. As to expression, expressed in the apical meristems and young floral primordia. Detected in the floral meristems and at the base of the floral organs.

It catalyses the reaction indole-3-pyruvate + NADPH + O2 + H(+) = (indol-3-yl)acetate + CO2 + NADP(+) + H2O. It functions in the pathway plant hormone metabolism; auxin biosynthesis. Its function is as follows. Involved in auxin biosynthesis, but not in the tryptamine or the CYP79B2/B3 branches. Catalyzes in vitro the N-oxidation of tryptamine to form N-hydroxyl tryptamine. Involved during embryogenesis and seedling development. Required for the formation of floral organs and vascular tissues. Belongs to the set of redundant YUCCA genes probably responsible for auxin biosynthesis in shoots. This Arabidopsis thaliana (Mouse-ear cress) protein is Probable indole-3-pyruvate monooxygenase YUCCA1 (YUC1).